The primary structure comprises 311 residues: Manganese-dependent inorganic pyrophosphatase (311 aa).

Mn(2+) is bound by residues His10, Asp14, Asp16, Asp75, His97, and Asp149.

The protein belongs to the PPase class C family. In terms of assembly, homodimer. Mn(2+) is required as a cofactor.

It carries out the reaction diphosphate + H2O = 2 phosphate + H(+). This chain is Manganese-dependent inorganic pyrophosphatase (ppaC), found in Methanothrix thermoacetophila (strain DSM 6194 / JCM 14653 / NBRC 101360 / PT) (Methanosaeta thermophila).